The following is a 156-amino-acid chain: uncharacterized protein (156 aa).

The protein resides in the mitochondrion. This is an uncharacterized protein from Paramecium tetraurelia.